Consider the following 176-residue polypeptide: Large ribosomal subunit protein uL10 (176 aa).

This sequence belongs to the universal ribosomal protein uL10 family. In terms of assembly, part of the ribosomal stalk of the 50S ribosomal subunit. The N-terminus interacts with L11 and the large rRNA to form the base of the stalk. The C-terminus forms an elongated spine to which L12 dimers bind in a sequential fashion forming a multimeric L10(L12)X complex.

Functionally, forms part of the ribosomal stalk, playing a central role in the interaction of the ribosome with GTP-bound translation factors. This chain is Large ribosomal subunit protein uL10, found in Carboxydothermus hydrogenoformans (strain ATCC BAA-161 / DSM 6008 / Z-2901).